We begin with the raw amino-acid sequence, 192 residues long: Putative cyclic ADP-D-ribose synthase ThsB1 (192 aa).

This sequence belongs to the Thoeris B TIR-like family. Monomer; not seen to interact with ThsA.

The protein localises to the cytoplasm. Its activity is regulated as follows. Activated upon phage infection. Its function is as follows. TIR-like domain-containing component of the Thoeris antiviral defense system, composed of ThsA and ThsB. Expression of ThsA and ThsB in B.subtilis (strain BEST7003) confers resistance to phages SBSphiC, SBSphiJ and SPO1. Phage infection activates this protein so that 30 to 45 minutes post-infection with phage SPO1 it generates a signal molecule that in turn activates the NAD(+) hydrolase activity of ThsA. The signal is similar to cyclic ADP-D-ribose, but how it differs is unknown. In vitro purified (but unactivated) ThsB has no NAD(+) hydrolyzing activity, no activity on AMP, CMP, GMP or UMP, does not alter the activity of ThsA, does not bind DNA. Hydrolyzes NAD(+) to make a cyclic ADP-D-ribose (cADPR) signaling molecule; might make 3'cADPR. This Bacillus cereus (strain MSX-D12) protein is Putative cyclic ADP-D-ribose synthase ThsB1.